We begin with the raw amino-acid sequence, 170 residues long: Adenine phosphoribosyltransferase (170 aa).

This sequence belongs to the purine/pyrimidine phosphoribosyltransferase family. Homodimer.

The protein localises to the cytoplasm. It catalyses the reaction AMP + diphosphate = 5-phospho-alpha-D-ribose 1-diphosphate + adenine. The protein operates within purine metabolism; AMP biosynthesis via salvage pathway; AMP from adenine: step 1/1. In terms of biological role, catalyzes a salvage reaction resulting in the formation of AMP, that is energically less costly than de novo synthesis. The protein is Adenine phosphoribosyltransferase of Streptococcus suis (strain 98HAH33).